The following is a 243-amino-acid chain: Pyridoxine 5'-phosphate synthase (243 aa).

Asn9 is a 3-amino-2-oxopropyl phosphate binding site. Residue 11 to 12 coordinates 1-deoxy-D-xylulose 5-phosphate; the sequence is DH. Residue Arg20 participates in 3-amino-2-oxopropyl phosphate binding. The active-site Proton acceptor is His45. 1-deoxy-D-xylulose 5-phosphate contacts are provided by Arg47 and His52. Glu72 serves as the catalytic Proton acceptor. Thr102 is a 1-deoxy-D-xylulose 5-phosphate binding site. His193 (proton donor) is an active-site residue. 3-amino-2-oxopropyl phosphate-binding positions include Gly194 and 215–216; that span reads GH.

The protein belongs to the PNP synthase family. As to quaternary structure, homooctamer; tetramer of dimers.

It is found in the cytoplasm. The catalysed reaction is 3-amino-2-oxopropyl phosphate + 1-deoxy-D-xylulose 5-phosphate = pyridoxine 5'-phosphate + phosphate + 2 H2O + H(+). It functions in the pathway cofactor biosynthesis; pyridoxine 5'-phosphate biosynthesis; pyridoxine 5'-phosphate from D-erythrose 4-phosphate: step 5/5. Its function is as follows. Catalyzes the complicated ring closure reaction between the two acyclic compounds 1-deoxy-D-xylulose-5-phosphate (DXP) and 3-amino-2-oxopropyl phosphate (1-amino-acetone-3-phosphate or AAP) to form pyridoxine 5'-phosphate (PNP) and inorganic phosphate. The protein is Pyridoxine 5'-phosphate synthase of Yersinia pseudotuberculosis serotype I (strain IP32953).